Reading from the N-terminus, the 316-residue chain is tRNA dimethylallyltransferase (316 aa).

Residue 17-24 (GPTASGKT) coordinates ATP. 19–24 (TASGKT) is a binding site for substrate. Interaction with substrate tRNA regions lie at residues 42–45 (DSAL), 166–170 (QRLSR), 247–252 (RCVGYR), and 280–287 (KRQITWLR).

The protein belongs to the IPP transferase family. Monomer. It depends on Mg(2+) as a cofactor.

The catalysed reaction is adenosine(37) in tRNA + dimethylallyl diphosphate = N(6)-dimethylallyladenosine(37) in tRNA + diphosphate. Its function is as follows. Catalyzes the transfer of a dimethylallyl group onto the adenine at position 37 in tRNAs that read codons beginning with uridine, leading to the formation of N6-(dimethylallyl)adenosine (i(6)A). This Escherichia coli O45:K1 (strain S88 / ExPEC) protein is tRNA dimethylallyltransferase.